The chain runs to 134 residues: Protein LctB (134 aa).

This chain is Protein LctB (lctB), found in Geobacillus stearothermophilus (Bacillus stearothermophilus).